Here is a 1487-residue protein sequence, read N- to C-terminus: Chromosome partition protein MukB (1487 aa).

Residue 34 to 41 participates in ATP binding; sequence GGNGAGKS. 6 coiled-coil regions span residues 297 to 458, 506 to 601, 637 to 666, 781 to 806, 836 to 1109, and 1210 to 1266; these read GSRE…TNAL, RESQ…LEAI, LEQEKELSLAKDKLAERRSQLESEIERLAS, RAAREQRLELLRNEREEVVEKHAKAA, EQAL…ELRT, and VEAI…LSNI. The tract at residues 667-784 is flexible hinge; sequence PGGSNDPRLK…EIPLFGRAAR (118 aa).

The protein belongs to the SMC family. MukB subfamily. As to quaternary structure, homodimerization via its hinge domain. Binds to DNA via its C-terminal region. Interacts, and probably forms a ternary complex, with MukE and MukF via its C-terminal region. The complex formation is stimulated by calcium or magnesium. Interacts with tubulin-related protein FtsZ.

The protein resides in the cytoplasm. The protein localises to the nucleoid. Functionally, plays a central role in chromosome condensation, segregation and cell cycle progression. Functions as a homodimer, which is essential for chromosome partition. Involved in negative DNA supercoiling in vivo, and by this means organize and compact chromosomes. May achieve or facilitate chromosome segregation by condensation DNA from both sides of a centrally located replisome during cell division. This Vibrio parahaemolyticus serotype O3:K6 (strain RIMD 2210633) protein is Chromosome partition protein MukB.